Consider the following 783-residue polypeptide: Protein SEY1 (783 aa).

Over 1 to 677 (MTSQAIQLID…KRSIVTSSTH (677 aa)) the chain is Cytoplasmic. One can recognise a GB1/RHD3-type G domain in the interval 33–265 (GFNYHVISVF…YLLKPNYHHK (233 aa)). 43–50 (GSQSSGKS) lines the GTP pocket. Positions 449 to 472 (HEKKLQLRESELNALLSKIKKQLT) form a coiled coil. The chain crosses the membrane as a helical span at residues 678-698 (IPIWIYAVIVVLGWNEFMIVI). Over 699–701 (RNP) the chain is Lumenal. The helical transmembrane segment at 702–722 (LFVTLALLSIVSFYFIQKFGL) threads the bilayer. Residues 723 to 783 (WGPVMNVVNT…SSSSGNEDSD (61 aa)) are Cytoplasmic-facing.

It belongs to the TRAFAC class dynamin-like GTPase superfamily. GB1/RHD3 GTPase family. RHD3 subfamily.

The protein resides in the endoplasmic reticulum membrane. Functionally, cooperates with the reticulon proteins and tubule-shaping DP1 family proteins to generate and maintain the structure of the tubular endoplasmic reticulum network. Has GTPase activity, which is required for its function in ER organization. This is Protein SEY1 from Candida glabrata (strain ATCC 2001 / BCRC 20586 / JCM 3761 / NBRC 0622 / NRRL Y-65 / CBS 138) (Yeast).